The primary structure comprises 320 residues: Cytochrome f (320 aa).

A signal peptide spans 1 to 35 (MNFFTHKKNNFGSFVTIFSFLVALGVTNLTPAAEA). Residues Tyr-36, Cys-56, Cys-59, and His-60 each contribute to the heme site. A helical membrane pass occupies residues 286-306 (IQGLLVFFATVLFAQVLLVLK).

It belongs to the cytochrome f family. In terms of assembly, the 4 large subunits of the cytochrome b6-f complex are cytochrome b6, subunit IV (17 kDa polypeptide, petD), cytochrome f and the Rieske protein, while the 4 small subunits are PetG, PetL, PetM and PetN. The complex functions as a dimer. It depends on heme as a cofactor.

It is found in the plastid. Its subcellular location is the chloroplast thylakoid membrane. Component of the cytochrome b6-f complex, which mediates electron transfer between photosystem II (PSII) and photosystem I (PSI), cyclic electron flow around PSI, and state transitions. The sequence is that of Cytochrome f from Tetradesmus obliquus (Green alga).